We begin with the raw amino-acid sequence, 178 residues long: ATP synthase subunit delta (178 aa).

Belongs to the ATPase delta chain family. In terms of assembly, F-type ATPases have 2 components, F(1) - the catalytic core - and F(0) - the membrane proton channel. F(1) has five subunits: alpha(3), beta(3), gamma(1), delta(1), epsilon(1). F(0) has three main subunits: a(1), b(2) and c(10-14). The alpha and beta chains form an alternating ring which encloses part of the gamma chain. F(1) is attached to F(0) by a central stalk formed by the gamma and epsilon chains, while a peripheral stalk is formed by the delta and b chains.

The protein resides in the cell membrane. F(1)F(0) ATP synthase produces ATP from ADP in the presence of a proton or sodium gradient. F-type ATPases consist of two structural domains, F(1) containing the extramembraneous catalytic core and F(0) containing the membrane proton channel, linked together by a central stalk and a peripheral stalk. During catalysis, ATP synthesis in the catalytic domain of F(1) is coupled via a rotary mechanism of the central stalk subunits to proton translocation. Its function is as follows. This protein is part of the stalk that links CF(0) to CF(1). It either transmits conformational changes from CF(0) to CF(1) or is implicated in proton conduction. The protein is ATP synthase subunit delta of Geobacillus stearothermophilus (Bacillus stearothermophilus).